The chain runs to 381 residues: Arrestin-C (381 aa).

It belongs to the arrestin family. As to quaternary structure, homodimer; disulfide-linked in response to retinal illumination. Interacts with CXCR4; the interaction is dependent on the C-terminal phosphorylation of CXCR4 and modulates the calcium ion mobilization activity of CXCR4. Interacts with GPR84. As to expression, inner and outer segments, and the inner plexiform regions of the retina.

The protein resides in the photoreceptor inner segment. The protein localises to the cell projection. It localises to the cilium. It is found in the photoreceptor outer segment. May play a role in an as yet undefined retina-specific signal transduction. Could bind to photoactivated-phosphorylated red/green opsins. This chain is Arrestin-C (Arr3), found in Mus musculus (Mouse).